The sequence spans 92 residues: Small ribosomal subunit protein uS19 (92 aa).

Belongs to the universal ribosomal protein uS19 family.

Functionally, protein S19 forms a complex with S13 that binds strongly to the 16S ribosomal RNA. The chain is Small ribosomal subunit protein uS19 from Rhodopseudomonas palustris (strain HaA2).